We begin with the raw amino-acid sequence, 207 residues long: LexA repressor (207 aa).

The H-T-H motif DNA-binding region spans 28-48 (RAEIARRLGFKSPNAAEEHLK). Residues Ser126 and Lys163 each act as for autocatalytic cleavage activity in the active site.

The protein belongs to the peptidase S24 family. In terms of assembly, homodimer.

It catalyses the reaction Hydrolysis of Ala-|-Gly bond in repressor LexA.. In terms of biological role, represses a number of genes involved in the response to DNA damage (SOS response), including recA and lexA. In the presence of single-stranded DNA, RecA interacts with LexA causing an autocatalytic cleavage which disrupts the DNA-binding part of LexA, leading to derepression of the SOS regulon and eventually DNA repair. The chain is LexA repressor from Marinomonas sp. (strain MWYL1).